Consider the following 976-residue polypeptide: Leucine--tRNA ligase (976 aa).

Residues 1–23 (MTESPTTTPGSTSGAPSGVPSGV) show a composition bias toward low complexity. The tract at residues 1–34 (MTESPTTTPGSTSGAPSGVPSGVNDAESDAPRHR) is disordered. The short motif at 86–97 (PYPSGEGLHVGH) is the 'HIGH' region element. The 'KMSKS' region motif lies at 745 to 749 (KIGKS). Lysine 748 provides a ligand contact to ATP.

Belongs to the class-I aminoacyl-tRNA synthetase family.

The protein localises to the cytoplasm. It carries out the reaction tRNA(Leu) + L-leucine + ATP = L-leucyl-tRNA(Leu) + AMP + diphosphate. The sequence is that of Leucine--tRNA ligase from Mycobacterium marinum (strain ATCC BAA-535 / M).